Consider the following 591-residue polypeptide: MVATSKQTTQGYVVEAYGNLLRVHVDGHVRQGEVAYVSVDNTWLKAEIIEVVGDEVKIQVFEETQGISRGALVTFSGHLLEAELGPGLLQGIFDGLQNRLEILADTSLFLRRGEYVNAICRETVWAYTQKASVGSVLSRGDVLGTVKEGRFDHKIMVPFSCFEEVTITWVISSGNYTVDTVVAKGRTSTGEELEFTMVQKWPIKQAFLEGEKVPSHEIMDVGLRVLDTQIPVLKGGTFCTPGPFGAGKTVLQHHLSKYAAVDIVVLCACGERAGEVVEILQEFPHLKDPHTGQSLMHRTCIICNTSSMPVAARESSIYLGITIAEYYRQMGLHILLLADSTSRWAQALREISGRLEEIPGEEAFPAYLASRIAAFYERGGAVKMKDGSEGSLTICGAVSPAGGNFEEPVTQATLSVVGAFCGLSKARADARRYPSIDPMISWSKYLDSVAEILEKKVPGWGESVKQASRFLEEGAEIGKRIEVVGEEGISMEDMEIFLKSELYDFCYLQQNAFDAEDCYCPFDRQIELFSLMNHIFNSRFCFDCPDNARSFFLELQSKIKTLNGQKFLSEEYQKGLEVIYKLLESKMVQTA.

Position 242–249 (242–249 (GPFGAGKT)) interacts with ATP.

Belongs to the ATPase alpha/beta chains family.

It carries out the reaction ATP + H2O + 4 H(+)(in) = ADP + phosphate + 5 H(+)(out). Functionally, produces ATP from ADP in the presence of a proton gradient across the membrane. The V-type alpha chain is a catalytic subunit. The chain is V-type ATP synthase alpha chain from Chlamydia trachomatis serovar L2 (strain ATCC VR-902B / DSM 19102 / 434/Bu).